Here is a 139-residue protein sequence, read N- to C-terminus: FAD synthase (139 aa).

ATP is bound by residues 9-10, 14-17, and N92; these read TF and HPGH.

This sequence belongs to the archaeal FAD synthase family. Homodimer. It depends on a divalent metal cation as a cofactor.

It carries out the reaction FMN + ATP + H(+) = FAD + diphosphate. The protein operates within cofactor biosynthesis; FAD biosynthesis; FAD from FMN: step 1/1. Functionally, catalyzes the transfer of the AMP portion of ATP to flavin mononucleotide (FMN) to produce flavin adenine dinucleotide (FAD) coenzyme. The protein is FAD synthase of Methanocella paludicola (strain DSM 17711 / JCM 13418 / NBRC 101707 / SANAE).